We begin with the raw amino-acid sequence, 274 residues long: NADH-ubiquinone oxidoreductase chain 2 (274 aa).

8 consecutive transmembrane segments (helical) span residues methionine 28–proline 48, leucine 54–isoleucine 74, isoleucine 79–leucine 99, leucine 107–glutamate 127, serine 128–phenylalanine 148, phenylalanine 171–proline 191, phenylalanine 206–cysteine 226, and leucine 254–phenylalanine 274.

The protein belongs to the complex I subunit 2 family.

Its subcellular location is the mitochondrion inner membrane. The enzyme catalyses a ubiquinone + NADH + 5 H(+)(in) = a ubiquinol + NAD(+) + 4 H(+)(out). Core subunit of the mitochondrial membrane respiratory chain NADH dehydrogenase (Complex I) that is believed to belong to the minimal assembly required for catalysis. Complex I functions in the transfer of electrons from NADH to the respiratory chain. The immediate electron acceptor for the enzyme is believed to be ubiquinone. This chain is NADH-ubiquinone oxidoreductase chain 2 (mt:ND2), found in Drosophila mauritiana (Fruit fly).